The sequence spans 122 residues: Small ribosomal subunit protein uS13 (122 aa).

The interval 93 to 122 (RRGLPVRGQRTKTNARTRKGPKKTVAGKKK) is disordered.

This sequence belongs to the universal ribosomal protein uS13 family. In terms of assembly, part of the 30S ribosomal subunit. Forms a loose heterodimer with protein S19. Forms two bridges to the 50S subunit in the 70S ribosome.

In terms of biological role, located at the top of the head of the 30S subunit, it contacts several helices of the 16S rRNA. In the 70S ribosome it contacts the 23S rRNA (bridge B1a) and protein L5 of the 50S subunit (bridge B1b), connecting the 2 subunits; these bridges are implicated in subunit movement. Contacts the tRNAs in the A and P-sites. This Micrococcus luteus (strain ATCC 4698 / DSM 20030 / JCM 1464 / CCM 169 / CCUG 5858 / IAM 1056 / NBRC 3333 / NCIMB 9278 / NCTC 2665 / VKM Ac-2230) (Micrococcus lysodeikticus) protein is Small ribosomal subunit protein uS13.